Here is a 203-residue protein sequence, read N- to C-terminus: Casparian strip membrane protein 1 (203 aa).

Residue A2 is modified to N-acetylalanine. Residues A2–R40 are Cytoplasmic-facing. The chain crosses the membrane as a helical span at residues G41–A61. At S62–Y92 the chain is on the extracellular side. A helical transmembrane segment spans residues F93 to V113. Residues T114–R124 lie on the Cytoplasmic side of the membrane. The chain crosses the membrane as a helical span at residues L125–A145. The Extracellular portion of the chain corresponds to A146–T177. N156 and N174 each carry an N-linked (GlcNAc...) asparagine glycan. Residues A178 to I198 traverse the membrane as a helical segment. Residues A199–H203 are Cytoplasmic-facing.

Belongs to the Casparian strip membrane proteins (CASP) family. As to quaternary structure, homodimer and heterodimers.

The protein resides in the cell membrane. Regulates membrane-cell wall junctions and localized cell wall deposition. Required for establishment of the Casparian strip membrane domain (CSD) and the subsequent formation of Casparian strips, a cell wall modification of the root endodermis that determines an apoplastic barrier between the intraorganismal apoplasm and the extraorganismal apoplasm and prevents lateral diffusion. This is Casparian strip membrane protein 1 from Arabidopsis lyrata subsp. lyrata (Lyre-leaved rock-cress).